The primary structure comprises 254 residues: 4-hydroxy-tetrahydrodipicolinate reductase (254 aa).

8–13 serves as a coordination point for NAD(+); sequence GAFGRM. Lys36 is an NADP(+) binding site. NAD(+) contacts are provided by residues 89–91 and 115–118; these read GTT and STNY. The Proton donor/acceptor role is filled by His147. (S)-2,3,4,5-tetrahydrodipicolinate is bound at residue His148. Lys151 acts as the Proton donor in catalysis. Residue 157–158 coordinates (S)-2,3,4,5-tetrahydrodipicolinate; it reads GT.

It belongs to the DapB family.

It localises to the cytoplasm. The enzyme catalyses (S)-2,3,4,5-tetrahydrodipicolinate + NAD(+) + H2O = (2S,4S)-4-hydroxy-2,3,4,5-tetrahydrodipicolinate + NADH + H(+). It catalyses the reaction (S)-2,3,4,5-tetrahydrodipicolinate + NADP(+) + H2O = (2S,4S)-4-hydroxy-2,3,4,5-tetrahydrodipicolinate + NADPH + H(+). Its pathway is amino-acid biosynthesis; L-lysine biosynthesis via DAP pathway; (S)-tetrahydrodipicolinate from L-aspartate: step 4/4. Its function is as follows. Catalyzes the conversion of 4-hydroxy-tetrahydrodipicolinate (HTPA) to tetrahydrodipicolinate. The chain is 4-hydroxy-tetrahydrodipicolinate reductase from Methanospirillum hungatei JF-1 (strain ATCC 27890 / DSM 864 / NBRC 100397 / JF-1).